A 287-amino-acid chain; its full sequence is 4-diphosphocytidyl-2-C-methyl-D-erythritol kinase (287 aa).

The active site involves Lys-11. 93-103 (PFGAGLGGGSS) contributes to the ATP binding site. The active site involves Asp-135.

The protein belongs to the GHMP kinase family. IspE subfamily.

It catalyses the reaction 4-CDP-2-C-methyl-D-erythritol + ATP = 4-CDP-2-C-methyl-D-erythritol 2-phosphate + ADP + H(+). It participates in isoprenoid biosynthesis; isopentenyl diphosphate biosynthesis via DXP pathway; isopentenyl diphosphate from 1-deoxy-D-xylulose 5-phosphate: step 3/6. In terms of biological role, catalyzes the phosphorylation of the position 2 hydroxy group of 4-diphosphocytidyl-2C-methyl-D-erythritol. The sequence is that of 4-diphosphocytidyl-2-C-methyl-D-erythritol kinase from Chlorobium luteolum (strain DSM 273 / BCRC 81028 / 2530) (Pelodictyon luteolum).